The chain runs to 305 residues: Glycine--tRNA ligase alpha subunit (305 aa).

This sequence belongs to the class-II aminoacyl-tRNA synthetase family. Tetramer of two alpha and two beta subunits.

It is found in the cytoplasm. It catalyses the reaction tRNA(Gly) + glycine + ATP = glycyl-tRNA(Gly) + AMP + diphosphate. This is Glycine--tRNA ligase alpha subunit from Streptococcus pyogenes serotype M49 (strain NZ131).